The primary structure comprises 484 residues: MVENQKAMPQPEMRRIRRIHFVGIGGVGMCGIAEVLLNLGYQVSGSDLKASPVTERLESFGAQIFIGHRAENAANADVLVVSSAVNTSNPEVATALERRIPVVPRAEMLAELMRYRHGVAVAGTHGKTTTTSLLASVFAAGGLDPTFVIGGRLNAAGTNAQLGTSRYLIAEADESDASFLHLQPLVAVVTNIDADHMATYDGDFNKLKKTFVDFLHNLPFYGLAVMCLDDPVVREILPQVKRPTVTYGFSEEADVRAINVRQQGMQTFFTVLRRDREPLDVSVNMPGNHNVLNSLATICIATDEGISDEAIVQGLSGFQGVGRRFQVYGELPVEGGNVMLVDDYGHHPTEVAAVIKAVRGGWPERRLVMVYQPHRFSRTRDLYDDFVQVLADANVLLLMEVYPAGEEPIPGADSRQLCHSIRQRGQLDPIYIERGVDLAPLVKPLLRAGDILLCQGAGDIGGLAPKLLGSPLFAGAVAAGKGAK.

Residue 123 to 129 (GTHGKTT) coordinates ATP.

It belongs to the MurCDEF family.

The protein localises to the cytoplasm. The enzyme catalyses UDP-N-acetyl-alpha-D-muramate + L-alanine + ATP = UDP-N-acetyl-alpha-D-muramoyl-L-alanine + ADP + phosphate + H(+). Its pathway is cell wall biogenesis; peptidoglycan biosynthesis. Its function is as follows. Cell wall formation. This chain is UDP-N-acetylmuramate--L-alanine ligase, found in Pseudomonas fluorescens (strain ATCC BAA-477 / NRRL B-23932 / Pf-5).